Reading from the N-terminus, the 592-residue chain is MAATDFFFAFVFSFALIFGFSFAGDPYVSYDFTLSYITASPLGVPQQVIAVNGKFPGPVINATTNYNVHVNVLNHLDEPLLLTWPGVQMRRNSWQDGVLGTNCPIPPNWNFTYDFQLKDQIGSYFYSPSLNFQRASGGFGALIINNRDLVPIPFTEPDGEIIFIIGDWYTQNHTALRRILDSGKELGMPDGVLINGKGPFKYNSSVPDGIEHETVNVDPGKTYRIRVHNVGISTSLNFRIQNHKLLLIETEGRYTSQMNFTDFDVHVGQSYSFLVTMDQNATSDYYIVASARFVNETVWQRVTGVGILHYSNSKGPASGPLPVSATDVNHPWSAMNQPRAIKQNTSASGARPNPQGSFHYGQINITRTYILRSLPPTKINGKLRATLNGISFVNPSTPMRLADDHKVKGDYMLDFPDRPLDEKLPRLSSSIINATYKGFIQVIFQNNDTKIQSFHIDGYAFYVVAMDFGIWSEDRNSSYNNWDAVARSTVEVYPGAWTAVLISLDNVGVWNIRVENLDRWYLGQETYMRIINPEENGSTEMDPPENVMYCGALQAMQKEQHHSSATKSMTNGQLILIFSMMMVLLSSFSSFC.

The N-terminal stretch at 1-23 (MAATDFFFAFVFSFALIFGFSFA) is a signal peptide. Residues Asn61, Asn110, Asn172, Asn203, Asn259, Asn280, Asn295, Asn344, Asn364, Asn433, and Asn447 are each glycosylated (N-linked (GlcNAc...) asparagine). A Cu cation-binding site is contributed by His455. N-linked (GlcNAc...) asparagine glycans are attached at residues Asn476 and Asn536. Ser564 carries the GPI-anchor amidated serine lipid modification. Residues 565-592 (ATKSMTNGQLILIFSMMMVLLSSFSSFC) constitute a propeptide, removed in mature form.

Belongs to the multicopper oxidase family. Requires Cu cation as cofactor.

It is found in the cell membrane. The chain is Monocopper oxidase-like protein SKS2 (SKS2) from Arabidopsis thaliana (Mouse-ear cress).